The sequence spans 169 residues: Shikimate kinase (169 aa).

G12 to T17 is an ATP binding site. S16 contacts Mg(2+). Substrate-binding residues include D34, R57, and G79. R116 contributes to the ATP binding site. Residue R133 coordinates substrate.

The protein belongs to the shikimate kinase family. As to quaternary structure, monomer. Requires Mg(2+) as cofactor.

The protein resides in the cytoplasm. It carries out the reaction shikimate + ATP = 3-phosphoshikimate + ADP + H(+). The protein operates within metabolic intermediate biosynthesis; chorismate biosynthesis; chorismate from D-erythrose 4-phosphate and phosphoenolpyruvate: step 5/7. Catalyzes the specific phosphorylation of the 3-hydroxyl group of shikimic acid using ATP as a cosubstrate. In Clostridium beijerinckii (strain ATCC 51743 / NCIMB 8052) (Clostridium acetobutylicum), this protein is Shikimate kinase.